A 159-amino-acid chain; its full sequence is 2-C-methyl-D-erythritol 2,4-cyclodiphosphate synthase (159 aa).

Residues aspartate 10 and histidine 12 each contribute to the a divalent metal cation site. Residues 10 to 12 (DVH) and 36 to 37 (HS) each bind 4-CDP-2-C-methyl-D-erythritol 2-phosphate. Histidine 44 contributes to the a divalent metal cation binding site. 4-CDP-2-C-methyl-D-erythritol 2-phosphate is bound by residues 58-60 (DIG), 63-67 (FPDTD), 102-108 (AQVPKMA), 134-137 (TTTE), phenylalanine 141, and arginine 144.

The protein belongs to the IspF family. As to quaternary structure, homotrimer. A divalent metal cation serves as cofactor.

It carries out the reaction 4-CDP-2-C-methyl-D-erythritol 2-phosphate = 2-C-methyl-D-erythritol 2,4-cyclic diphosphate + CMP. The protein operates within isoprenoid biosynthesis; isopentenyl diphosphate biosynthesis via DXP pathway; isopentenyl diphosphate from 1-deoxy-D-xylulose 5-phosphate: step 4/6. Functionally, involved in the biosynthesis of isopentenyl diphosphate (IPP) and dimethylallyl diphosphate (DMAPP), two major building blocks of isoprenoid compounds. Catalyzes the conversion of 4-diphosphocytidyl-2-C-methyl-D-erythritol 2-phosphate (CDP-ME2P) to 2-C-methyl-D-erythritol 2,4-cyclodiphosphate (ME-CPP) with a corresponding release of cytidine 5-monophosphate (CMP). The chain is 2-C-methyl-D-erythritol 2,4-cyclodiphosphate synthase from Shewanella woodyi (strain ATCC 51908 / MS32).